Reading from the N-terminus, the 370-residue chain is UDP-N-acetylglucosamine--N-acetylmuramyl-(pentapeptide) pyrophosphoryl-undecaprenol N-acetylglucosamine transferase (370 aa).

UDP-N-acetyl-alpha-D-glucosamine-binding positions include 20–22, asparagine 134, arginine 170, serine 204, isoleucine 257, and glutamine 301; that span reads TAG.

It belongs to the glycosyltransferase 28 family. MurG subfamily.

The protein resides in the cell membrane. The catalysed reaction is di-trans,octa-cis-undecaprenyl diphospho-N-acetyl-alpha-D-muramoyl-L-alanyl-D-glutamyl-meso-2,6-diaminopimeloyl-D-alanyl-D-alanine + UDP-N-acetyl-alpha-D-glucosamine = di-trans,octa-cis-undecaprenyl diphospho-[N-acetyl-alpha-D-glucosaminyl-(1-&gt;4)]-N-acetyl-alpha-D-muramoyl-L-alanyl-D-glutamyl-meso-2,6-diaminopimeloyl-D-alanyl-D-alanine + UDP + H(+). It participates in cell wall biogenesis; peptidoglycan biosynthesis. Cell wall formation. Catalyzes the transfer of a GlcNAc subunit on undecaprenyl-pyrophosphoryl-MurNAc-pentapeptide (lipid intermediate I) to form undecaprenyl-pyrophosphoryl-MurNAc-(pentapeptide)GlcNAc (lipid intermediate II). The polypeptide is UDP-N-acetylglucosamine--N-acetylmuramyl-(pentapeptide) pyrophosphoryl-undecaprenol N-acetylglucosamine transferase (Corynebacterium jeikeium (strain K411)).